Reading from the N-terminus, the 200-residue chain is Superoxide dismutase [Mn], mitochondrial (200 aa).

4 residues coordinate Mn(2+): H27, H72, D157, and H161.

Belongs to the iron/manganese superoxide dismutase family. The cofactor is Mn(2+).

It localises to the mitochondrion matrix. It catalyses the reaction 2 superoxide + 2 H(+) = H2O2 + O2. In terms of biological role, destroys superoxide anion radicals which are normally produced within the cells and which are toxic to biological systems. This Agaricus bisporus (White button mushroom) protein is Superoxide dismutase [Mn], mitochondrial (sod).